Consider the following 341-residue polypeptide: Phosphate acyltransferase (341 aa).

Belongs to the PlsX family. Homodimer. Probably interacts with PlsY.

It localises to the cytoplasm. The catalysed reaction is a fatty acyl-[ACP] + phosphate = an acyl phosphate + holo-[ACP]. It participates in lipid metabolism; phospholipid metabolism. Functionally, catalyzes the reversible formation of acyl-phosphate (acyl-PO(4)) from acyl-[acyl-carrier-protein] (acyl-ACP). This enzyme utilizes acyl-ACP as fatty acyl donor, but not acyl-CoA. This Idiomarina loihiensis (strain ATCC BAA-735 / DSM 15497 / L2-TR) protein is Phosphate acyltransferase.